A 218-amino-acid polypeptide reads, in one-letter code: MRLILLGPPGAGKGTQATFITQTYGIPQISTGDMLRAAVKAGTPLGIEAKKVMDAGGLMPDEIIIGLVKDRLAQPDCANGYLFDGYPRTIPQADALKDAGVKLDYVIEIAVPDEDIVKRMSGRWVHLASGRSYNTQSNPPKVAGQDDITGEALIQRDDDREETVRHRLGIYQQQTRPLVDYYSSWAAQDPANAPKYRKISGVGSVEEIKARAAAALQS.

10–15 (GAGKGT) serves as a coordination point for ATP. The interval 30-59 (STGDMLRAAVKAGTPLGIEAKKVMDAGGLM) is NMP. Residues Thr-31, Arg-36, 57-59 (GLM), 85-88 (GYPR), and Gln-92 each bind AMP. An LID region spans residues 122–159 (GRWVHLASGRSYNTQSNPPKVAGQDDITGEALIQRDDD). Residues Arg-123 and 132–133 (SY) contribute to the ATP site. AMP is bound by residues Arg-156 and Arg-167. Gly-203 is an ATP binding site.

It belongs to the adenylate kinase family. As to quaternary structure, monomer.

It is found in the cytoplasm. The enzyme catalyses AMP + ATP = 2 ADP. The protein operates within purine metabolism; AMP biosynthesis via salvage pathway; AMP from ADP: step 1/1. In terms of biological role, catalyzes the reversible transfer of the terminal phosphate group between ATP and AMP. Plays an important role in cellular energy homeostasis and in adenine nucleotide metabolism. In Bordetella avium (strain 197N), this protein is Adenylate kinase.